The primary structure comprises 508 residues: Photosystem II CP47 reaction center protein (508 aa).

The next 6 membrane-spanning stretches (helical) occupy residues 21–36 (SVHIMHTALVSGWAGS), 101–115 (IMFSGLCFLAAIWHW), 140–156 (GIHLFLSGLACFGFGAF), 203–218 (IAAGTLGILAGLFHLS), 237–252 (VLSSSIAAVFFAAFVV), and 457–472 (SFALLFFFGHIWHGAR).

The protein belongs to the PsbB/PsbC family. PsbB subfamily. In terms of assembly, PSII is composed of 1 copy each of membrane proteins PsbA, PsbB, PsbC, PsbD, PsbE, PsbF, PsbH, PsbI, PsbJ, PsbK, PsbL, PsbM, PsbT, PsbX, PsbY, PsbZ, Psb30/Ycf12, at least 3 peripheral proteins of the oxygen-evolving complex and a large number of cofactors. It forms dimeric complexes. The cofactor is Binds multiple chlorophylls. PSII binds additional chlorophylls, carotenoids and specific lipids..

Its subcellular location is the plastid. It is found in the chloroplast thylakoid membrane. In terms of biological role, one of the components of the core complex of photosystem II (PSII). It binds chlorophyll and helps catalyze the primary light-induced photochemical processes of PSII. PSII is a light-driven water:plastoquinone oxidoreductase, using light energy to abstract electrons from H(2)O, generating O(2) and a proton gradient subsequently used for ATP formation. In Ceratophyllum demersum (Rigid hornwort), this protein is Photosystem II CP47 reaction center protein.